A 104-amino-acid polypeptide reads, in one-letter code: Gastrin (104 aa).

The first 21 residues, 1–21, serve as a signal peptide directing secretion; sequence MQRLCAHALILVLALAAFCEA. A propeptide spanning residues 22–58 is cleaved from the precursor; it reads SWKPHSQLQDAPVAPGANKGQEPLRMDRLGPASHPRR. Residues 26–70 form a disordered region; the sequence is HSQLQDAPVAPGANKGQEPLRMDRLGPASHPRRQLGLQDPPHMVA. Y87 carries the post-translational modification Sulfotyrosine. F92 is modified (phenylalanine amide). A Phosphoserine modification is found at S96. Residues 96 to 104 constitute a propeptide that is removed on maturation; the sequence is SAEEGDQHP.

It belongs to the gastrin/cholecystokinin family. In terms of processing, sulfation enhances proteolytic processing, and blocks peptide degradation. Levels of sulfation differ between proteolytically-cleaved gastrins and between tissues.

The protein resides in the secreted. Functionally, gastrin stimulates the stomach mucosa to produce and secrete hydrochloric acid and the pancreas to secrete its digestive enzymes. It also stimulates smooth muscle contraction and increases blood circulation and water secretion in the stomach and intestine. The sequence is that of Gastrin (GAST) from Ovis aries (Sheep).